A 498-amino-acid polypeptide reads, in one-letter code: ATP synthase subunit beta, chloroplastic (498 aa).

172–179 is an ATP binding site; it reads GGAGVGKT.

The protein belongs to the ATPase alpha/beta chains family. As to quaternary structure, F-type ATPases have 2 components, CF(1) - the catalytic core - and CF(0) - the membrane proton channel. CF(1) has five subunits: alpha(3), beta(3), gamma(1), delta(1), epsilon(1). CF(0) has four main subunits: a(1), b(1), b'(1) and c(9-12).

The protein resides in the plastid. The protein localises to the chloroplast thylakoid membrane. The catalysed reaction is ATP + H2O + 4 H(+)(in) = ADP + phosphate + 5 H(+)(out). In terms of biological role, produces ATP from ADP in the presence of a proton gradient across the membrane. The catalytic sites are hosted primarily by the beta subunits. This is ATP synthase subunit beta, chloroplastic from Nymphaea alba (White water-lily).